The primary structure comprises 231 residues: Orotate phosphoribosyltransferase (231 aa).

5-phospho-alpha-D-ribose 1-diphosphate is bound by residues Lys-27, Tyr-79–Lys-80, Arg-106, Lys-107, Lys-110, His-112, and Asp-133–Ala-141. 2 residues coordinate orotate: Thr-137 and Arg-166.

It belongs to the purine/pyrimidine phosphoribosyltransferase family. PyrE subfamily. Homodimer. Mg(2+) is required as a cofactor.

The catalysed reaction is orotidine 5'-phosphate + diphosphate = orotate + 5-phospho-alpha-D-ribose 1-diphosphate. It functions in the pathway pyrimidine metabolism; UMP biosynthesis via de novo pathway; UMP from orotate: step 1/2. Catalyzes the transfer of a ribosyl phosphate group from 5-phosphoribose 1-diphosphate to orotate, leading to the formation of orotidine monophosphate (OMP). The polypeptide is Orotate phosphoribosyltransferase (Bifidobacterium adolescentis (strain ATCC 15703 / DSM 20083 / NCTC 11814 / E194a)).